We begin with the raw amino-acid sequence, 230 residues long: Ribonuclease 3 (230 aa).

Residues tyrosine 5–aspartate 125 enclose the RNase III domain. Glutamate 40 serves as a coordination point for Mg(2+). Aspartate 44 is an active-site residue. Mg(2+) contacts are provided by aspartate 111 and glutamate 114. Glutamate 114 is a catalytic residue. In terms of domain architecture, DRBM spans aspartate 153–glutamine 223.

Belongs to the ribonuclease III family. Homodimer. Mg(2+) serves as cofactor.

The protein resides in the cytoplasm. The enzyme catalyses Endonucleolytic cleavage to 5'-phosphomonoester.. In terms of biological role, digests double-stranded RNA. Involved in the processing of primary rRNA transcript to yield the immediate precursors to the large and small rRNAs (23S and 16S). Processes some mRNAs, and tRNAs when they are encoded in the rRNA operon. Processes pre-crRNA and tracrRNA of type II CRISPR loci if present in the organism. This chain is Ribonuclease 3, found in Francisella tularensis subsp. holarctica (strain OSU18).